The sequence spans 196 residues: Dual-action ribosomal maturation protein DarP (196 aa).

This sequence belongs to the DarP family.

The protein localises to the cytoplasm. Member of a network of 50S ribosomal subunit biogenesis factors which assembles along the 30S-50S interface, preventing incorrect 23S rRNA structures from forming. Promotes peptidyl transferase center (PTC) maturation. This Stenotrophomonas maltophilia (strain R551-3) protein is Dual-action ribosomal maturation protein DarP.